Reading from the N-terminus, the 353-residue chain is 2-oxoglutarate-dependent dioxygenase phqC (353 aa).

The 117-residue stretch at 199–315 (CASELRLNNY…RRSCAFFLKA (117 aa)) folds into the Fe2OG dioxygenase domain. Fe cation contacts are provided by histidine 227, aspartate 229, and histidine 287. Arginine 302 provides a ligand contact to 2-oxoglutarate.

Belongs to the iron/ascorbate-dependent oxidoreductase family. Requires Fe(2+) as cofactor.

It functions in the pathway alkaloid biosynthesis. 2-oxoglutarate-dependent dioxygenase; part of the gene cluster that mediates the biosynthesis of paraherquamide, a fungal indole alkaloid that belongs to a family of natural products containing a characteristic bicyclo[2.2.2]diazaoctane core. The first steps in the biosynthesis of paraherquamide is the production of the beta-methyl-proline precursor from L-isoleucine. They require oxidation of a terminally hydroxylated L-isoleucine to the corresponding aldehyde by enzymes which have still to be identified. Spontaneous cyclization and dehydration would yield the 4-methyl pyrolline-5-carboxylic acid, which is then reduced by the pyrroline-5-carboxylate reductase phqD leading to the beta-methyl-proline precursor. The next step of paraherquamide biosynthesis involves coupling of beta-methyl-proline and L-tryptophan by the bimodular NRPS phqB, to produce a monooxopiperazine intermediate. The reductase (R) domain of phqB utilizes NADPH for hydride transfer to reduce the thioester bond of the T domain-tethered linear dipeptide to a hemithioaminal intermediate, which spontaneously cleaves the C-S bond to release the aldehyde product. This compound undergoes spontaneous cyclization and dehydration to give a dienamine which is reverse prenylated at C-2 by the reverse prenyltransferase phqJ. The other prenyltransferase present in the cluster, phqI may be a redundant gene in the pathway. During biosynthetic assembly, the key step to produce the polycyclic core is catalyzed by the bifunctional reductase and intramolecular [4+2] Diels-Alderase, phqE, resulting in formation of the [2.2.2] diazaoctane intermediate preparaherquamide. Following formation of preparaherquamide, an indole 2,3-epoxidation-initiated pinacol-like rearrangement is catalyzed by the phqK FAD-dependent monooxygenase. The prenyltransferase phqA, the cytochrome P450 monooxygenase phqL, and the FAD-linked oxidoreductase phqH (or the cytochrome P450 monooxygenase phqM), are proposed to be involved in the formation of the pyran ring. The FAD-dependent monooxygenase phqK is likely responsible for generation of the spiro-oxindole, and the N-methylation is likely mediated by the phqN methyltransferase leading to the isolable natural product paraherquamide F. However, the order of these biosynthetic steps has still to be determined. In late-stage paraherquamide biosynthesis, the third P450 monooxygenase, phqO, is probably responsible for the C-14 hydroxylation, transforming paraherquamide F to paraherquamide G, and paraherquamide E to the final product paraherquamide A. The expansion from the 6-membered ring pyran (in paraherquamides F and G) to the 7-membered dioxepin ring (in paraherquamides A and E) represents a poorly understood but intriguing process that probably involves the 2-oxoglutarate-dependent dioxygenase phqC. Finally, the remaining members of the paraherquamide cluster, including phqI as well as phqM (or phqH), do not have a clearly prescribed role and appear to be redundant. This Penicillium fellutanum protein is 2-oxoglutarate-dependent dioxygenase phqC.